The sequence spans 375 residues: Protein arginine N-methyltransferase 6 (375 aa).

The disordered stretch occupies residues 1-38; that stretch reads MSQPKKRKLESGGGGEGGEGTEEEDGAEREAALERPRR. Phosphothreonine is present on Thr-21. The segment covering 28–38 has biased composition (basic and acidic residues); sequence EREAALERPRR. Arg-29, Arg-35, and Arg-37 each carry asymmetric dimethylarginine; by autocatalysis. One can recognise an SAM-dependent MTase PRMT-type domain in the interval 44–374; it reads DQLYYECYSD…EEKTKDFAME (331 aa). His-57, Arg-66, Gly-90, Glu-112, and Glu-141 together coordinate S-adenosyl-L-methionine. Active-site residues include Glu-155 and Glu-164.

It belongs to the class I-like SAM-binding methyltransferase superfamily. Protein arginine N-methyltransferase family. PRMT6 subfamily. Interacts with EPB41L3 and NCOA1. In terms of assembly, (Microbial infection) Interacts with (and methylates) HIV-1 Tat, Rev and Nucleocapsid protein p7 (NC). As to quaternary structure, (Microbial infection) Interacts with human cytomegalovirus protein UL69. In terms of processing, automethylation enhances its stability and antiretroviral activity. As to expression, highly expressed in kidney and testis.

The protein resides in the nucleus. The catalysed reaction is L-arginyl-[protein] + 2 S-adenosyl-L-methionine = N(omega),N(omega)-dimethyl-L-arginyl-[protein] + 2 S-adenosyl-L-homocysteine + 2 H(+). Its function is as follows. Arginine methyltransferase that can catalyze the formation of both omega-N monomethylarginine (MMA) and asymmetrical dimethylarginine (aDMA), with a strong preference for the formation of aDMA. Preferentially methylates arginyl residues present in a glycine and arginine-rich domain and displays preference for monomethylated substrates. Specifically mediates the asymmetric dimethylation of histone H3 'Arg-2' to form H3R2me2a. H3R2me2a represents a specific tag for epigenetic transcriptional repression and is mutually exclusive with methylation on histone H3 'Lys-4' (H3K4me2 and H3K4me3). Acts as a transcriptional repressor of various genes such as HOXA2, THBS1 and TP53. Repression of TP53 blocks cellular senescence. Also methylates histone H2A and H4 'Arg-3' (H2AR3me and H4R3me, respectively). Acts as a regulator of DNA base excision during DNA repair by mediating the methylation of DNA polymerase beta (POLB), leading to the stimulation of its polymerase activity by enhancing DNA binding and processivity. Methylates HMGA1. Regulates alternative splicing events. Acts as a transcriptional coactivator of a number of steroid hormone receptors including ESR1, ESR2, PGR and NR3C1. Promotes fasting-induced transcriptional activation of the gluconeogenic program through methylation of the CRTC2 transcription coactivator. May play a role in innate immunity against HIV-1 in case of infection by methylating and impairing the function of various HIV-1 proteins such as Tat, Rev and Nucleocapsid protein p7 (NC). Methylates GPS2, protecting GPS2 from ubiquitination and degradation. Methylates SIRT7, inhibiting SIRT7 histone deacetylase activity and promoting mitochondria biogenesis. The polypeptide is Protein arginine N-methyltransferase 6 (PRMT6) (Homo sapiens (Human)).